The following is a 135-amino-acid chain: Phosphoribosyl-AMP cyclohydrolase (135 aa).

Asp-78 serves as a coordination point for Mg(2+). Cys-79 lines the Zn(2+) pocket. Mg(2+) is bound by residues Asp-80 and Asp-82. Residues Cys-96 and Cys-103 each contribute to the Zn(2+) site.

It belongs to the PRA-CH family. As to quaternary structure, homodimer. The cofactor is Mg(2+). Requires Zn(2+) as cofactor.

The protein resides in the cytoplasm. The enzyme catalyses 1-(5-phospho-beta-D-ribosyl)-5'-AMP + H2O = 1-(5-phospho-beta-D-ribosyl)-5-[(5-phospho-beta-D-ribosylamino)methylideneamino]imidazole-4-carboxamide. It functions in the pathway amino-acid biosynthesis; L-histidine biosynthesis; L-histidine from 5-phospho-alpha-D-ribose 1-diphosphate: step 3/9. In terms of biological role, catalyzes the hydrolysis of the adenine ring of phosphoribosyl-AMP. The protein is Phosphoribosyl-AMP cyclohydrolase of Cupriavidus metallidurans (strain ATCC 43123 / DSM 2839 / NBRC 102507 / CH34) (Ralstonia metallidurans).